The following is a 602-amino-acid chain: Arginine--tRNA ligase (602 aa).

The 'HIGH' region signature appears at 138–148; that stretch reads ANPTGPMHVGH.

It belongs to the class-I aminoacyl-tRNA synthetase family. As to quaternary structure, monomer.

It localises to the cytoplasm. The enzyme catalyses tRNA(Arg) + L-arginine + ATP = L-arginyl-tRNA(Arg) + AMP + diphosphate. This chain is Arginine--tRNA ligase, found in Gluconobacter oxydans (strain 621H) (Gluconobacter suboxydans).